The primary structure comprises 284 residues: Pantothenate synthetase (284 aa).

30 to 37 serves as a coordination point for ATP; it reads MGNLHNAH. His-37 functions as the Proton donor in the catalytic mechanism. A (R)-pantoate-binding site is contributed by Gln-61. Gln-61 contacts beta-alanine. 149–152 contacts ATP; sequence GIKD. Residue Gln-155 participates in (R)-pantoate binding. Residues Val-178 and 186–189 contribute to the ATP site; that span reads MSSR.

Belongs to the pantothenate synthetase family. Homodimer.

The protein resides in the cytoplasm. It carries out the reaction (R)-pantoate + beta-alanine + ATP = (R)-pantothenate + AMP + diphosphate + H(+). The protein operates within cofactor biosynthesis; (R)-pantothenate biosynthesis; (R)-pantothenate from (R)-pantoate and beta-alanine: step 1/1. Its function is as follows. Catalyzes the condensation of pantoate with beta-alanine in an ATP-dependent reaction via a pantoyl-adenylate intermediate. In Saccharophagus degradans (strain 2-40 / ATCC 43961 / DSM 17024), this protein is Pantothenate synthetase.